A 504-amino-acid polypeptide reads, in one-letter code: Glycerol kinase (504 aa).

ADP is bound at residue Thr-14. Residues Thr-14, Thr-15, and Ser-16 each coordinate ATP. Thr-14 contacts sn-glycerol 3-phosphate. Position 18 (Arg-18) interacts with ADP. Residues Arg-84, Glu-85, Tyr-136, and Asp-246 each contribute to the sn-glycerol 3-phosphate site. The glycerol site is built by Arg-84, Glu-85, Tyr-136, Asp-246, and Gln-247. Residues Thr-268 and Gly-311 each contribute to the ADP site. ATP is bound by residues Thr-268, Gly-311, Gln-315, and Gly-412. 2 residues coordinate ADP: Gly-412 and Asn-416.

Belongs to the FGGY kinase family.

The catalysed reaction is glycerol + ATP = sn-glycerol 3-phosphate + ADP + H(+). Its pathway is polyol metabolism; glycerol degradation via glycerol kinase pathway; sn-glycerol 3-phosphate from glycerol: step 1/1. Inhibited by fructose 1,6-bisphosphate (FBP). Functionally, key enzyme in the regulation of glycerol uptake and metabolism. Catalyzes the phosphorylation of glycerol to yield sn-glycerol 3-phosphate. The polypeptide is Glycerol kinase (Aliivibrio fischeri (strain ATCC 700601 / ES114) (Vibrio fischeri)).